The primary structure comprises 729 residues: Catalase-peroxidase (729 aa).

The segment at residues 95 to 217 (WHSAGTYRIT…LAAVQMGLIY (123 aa)) is a cross-link (tryptophyl-tyrosyl-methioninium (Trp-Tyr) (with M-243)). His-96 functions as the Proton acceptor in the catalytic mechanism. Residues 217–243 (YVNPEGPNGKPDPIAAATDIRETFFRM) constitute a cross-link (tryptophyl-tyrosyl-methioninium (Tyr-Met) (with W-95)). Position 258 (His-258) interacts with heme b.

The protein belongs to the peroxidase family. Peroxidase/catalase subfamily. In terms of assembly, homodimer or homotetramer. Requires heme b as cofactor. In terms of processing, formation of the three residue Trp-Tyr-Met cross-link is important for the catalase, but not the peroxidase activity of the enzyme.

It carries out the reaction H2O2 + AH2 = A + 2 H2O. It catalyses the reaction 2 H2O2 = O2 + 2 H2O. Its function is as follows. Bifunctional enzyme with both catalase and broad-spectrum peroxidase activity. In Nitrobacter hamburgensis (strain DSM 10229 / NCIMB 13809 / X14), this protein is Catalase-peroxidase.